Here is a 769-residue protein sequence, read N- to C-terminus: Serine protease HtrA-like (769 aa).

Residues 1–20 are compositionally biased toward basic residues; the sequence is MDIGKKHVIPKSQYRRKRRE. Positions 1-390 are disordered; sequence MDIGKKHVIP…ATSKLNKGRA (390 aa). Composition is skewed to basic and acidic residues over residues 21-64 and 71-108; these read FFHN…ERFK and LEQRNRDVNENKAEESKSNQDSKSAYNRDHYLTDDVSK. A compositionally biased stretch (polar residues) spans 126 to 137; it reads YEQNSEATLSTK. Over residues 138–186 the composition is skewed to basic and acidic residues; sequence STDKVESTEMRKLSSDKNKVGHEEQHVLSKPSEHDKETRIDSESSRTDS. Residues 247–262 are compositionally biased toward polar residues; it reads QQSQNEQTKTYTYGDS. 2 stretches are compositionally biased toward basic and acidic residues: residues 264–296 and 310–330; these read QNDKSNHENDLSHHIPSISDDKDNVMRENHIVD and KTDDDRKLDEKIHVEDKHKQN. Polar residues predominate over residues 331 to 347; sequence ADSSETVGYQSQSTASH. The segment covering 348–364 has biased composition (basic and acidic residues); that stretch reads RSTEKRNISINDHDKLN. Over residues 365–390 the composition is skewed to polar residues; that stretch reads GQKTNTKTSANNNQKKATSKLNKGRA. A helical transmembrane segment spans residues 410–430; it reads LVILMGIIILIVILNAIFNNV. Active-site charge relay system residues include histidine 504, aspartate 534, and serine 619. A PDZ domain is found at 680-733; sequence IASLNSFERQAVKLPGKVKNGVVVDQVDNNGLADQSGLKKGDVITELDGKLLED.

This sequence belongs to the peptidase S1C family.

The protein resides in the cell membrane. This Staphylococcus aureus (strain USA300) protein is Serine protease HtrA-like.